Reading from the N-terminus, the 327-residue chain is MKITSLKNRNLLTMNEFNQSELSHLIDRAIECKRLKKDRIFNLGLNHLNICGIFLKPSGRTSTSFVVASYDEGAHFQFFPADNIRFGHKESIKDFARVVGRLFDGIAFRGFEHEVAEELAKHSGIPVWNALTDTHHPTQVLADVMTVKEEFGRIEGVTIAYVGDGRNNMVTSLAIGALKFGYNLRIIAPNALHPTDAVLAGIYEQTPERNGSIEIFTEVAAGVHQADVIYTDVWISMGESVSVEERIALLKPYKVTEKMMALTGKADTIFMHCLPAFHDLDTEVARETPDLVEVEDSVFEGPQSRVFDQGENRMHTIKALMLETVVP.

Carbamoyl phosphate is bound by residues R109 and 136–139; that span reads HPTQ. Residues N168, D232, and 236–237 contribute to the L-ornithine site; that span reads SM. Carbamoyl phosphate is bound by residues 273 to 274 and R313; that span reads CL.

Belongs to the aspartate/ornithine carbamoyltransferase superfamily. OTCase family. In terms of assembly, homotrimer.

It is found in the cytoplasm. The catalysed reaction is carbamoyl phosphate + L-ornithine = L-citrulline + phosphate + H(+). It participates in amino-acid biosynthesis; L-arginine biosynthesis; L-arginine from L-ornithine and carbamoyl phosphate: step 1/3. Plays an important role in the survival and pathogenicity of P.syringae. Phaseolotoxin is a virulence factor that inhibits the catalysis of the host OTCase. Phaseolotoxin-producing bacteria do not suffer autointoxication because they possess the anabolic OTCase ArgK which can function even in the presence of phaseolotoxin. Reversibly catalyzes the transfer of the carbamoyl group from carbamoyl phosphate (CP) to the N(epsilon) atom of ornithine (ORN) to produce L-citrulline, which is a substrate for argininosuccinate synthetase, the enzyme involved in the final step in arginine biosynthesis. In Pseudomonas savastanoi pv. phaseolicola (Pseudomonas syringae pv. phaseolicola), this protein is Ornithine carbamoyltransferase 2, anabolic.